Consider the following 64-residue polypeptide: Large ribosomal subunit protein bL32 (64 aa).

The protein belongs to the bacterial ribosomal protein bL32 family.

In Flavobacterium johnsoniae (strain ATCC 17061 / DSM 2064 / JCM 8514 / BCRC 14874 / CCUG 350202 / NBRC 14942 / NCIMB 11054 / UW101) (Cytophaga johnsonae), this protein is Large ribosomal subunit protein bL32.